Consider the following 222-residue polypeptide: DUF1769 family protein (222 aa).

It belongs to the UPF0590 family.

It is found in the cytoplasm. The protein localises to the nucleus. This chain is DUF1769 family protein, found in Schizosaccharomyces pombe (strain 972 / ATCC 24843) (Fission yeast).